A 479-amino-acid chain; its full sequence is Adenylate kinase 8 (479 aa).

2 adenylate kinase regions span residues 58-258 (PKVV…TYVQ) and 269-471 (PKVL…SGII). 67-72 (ASGKTT) contributes to the ATP binding site. An NMP 1 region spans residues 87-113 (TKESLLEREFSRLSVEAKSYYQVYKKI). AMP contacts are provided by residues 140-143 (GIPE), Gln-147, and Arg-203. The tract at residues 177–206 (GKRIDPVTGEIYHTTFDWPPEPEIQNRLRQ) is LID 1. Position 278 to 283 (278 to 283 (GSGKRL)) interacts with ATP. Residues 298–327 (SCGQLLKEAVAAKSSFGELIQPFFEKRMTV) form an NMP 2 region. Residues 325–327 (MTV), 354–357 (GFPR), and Gln-361 contribute to the AMP site. Positions 391–424 (LRRTDPVTGERFHLMYKPPPTIEVQVRLLQNPKD) are LID 2. Arg-392 lines the ATP pocket.

The protein belongs to the adenylate kinase family. Interacts with CFAP45 and CFAP52; CFAP45 and AK8 dimerization may create a cavity at the interface of the dimer that can accommodate AMP.

The protein localises to the cytoplasm. It localises to the cytosol. It is found in the cytoskeleton. The protein resides in the cilium axoneme. The catalysed reaction is AMP + ATP = 2 ADP. The enzyme catalyses a 2'-deoxyribonucleoside 5'-diphosphate + ATP = a 2'-deoxyribonucleoside 5'-triphosphate + ADP. It carries out the reaction a ribonucleoside 5'-diphosphate + ATP = a ribonucleoside 5'-triphosphate + ADP. Nucleoside monophosphate (NMP) kinase that catalyzes the reversible transfer of the terminal phosphate group between nucleoside triphosphates and monophosphates. Has highest activity toward AMP, and weaker activity toward dAMP, CMP and dCMP. Also displays broad nucleoside diphosphate kinase activity. The sequence is that of Adenylate kinase 8 (Ak8) from Mus musculus (Mouse).